The chain runs to 487 residues: MGCEVSKLSALCCVSESGRSNPDVTGLDEEGRGESNDLPQFREFSIETIRNATSGFAAENIVSEHGERAPNVVYKGKLENQRRIAVKRFNRKSWPDSRQFLEEAKAVGQLRNHRMANLLGCCYEDEERLLIAEFMPNETLAKHLFHWESQPMKWAMRLRVALHIAQALEYCTSKGRALYHDLNAYRVLFDDDANPRLSCFGLMKNSRDGKSYSTNLAFTPPEYLRTGRVTPESVIYSFGTLLLDLLSGKHIPPSHALDLIRDRNIQMLMDSGLEGQFSSDDGTELIRLASRCLQYEPRERPNPKSLVSAMIPLQKDLEIASHQLLGVPNSATTTALSPLGEACLRSDLTAIHEIIEKLGYKDDEGATTELSFQMWTDQMQDTLVFKKKGDSAFRHKDFAKAIECYSQFIEVGTMGSPTVHARQSLCYLMNDMPREALNNAMQAQVISPAWHIASYLQAVALSALGQENEAHTALKDGAMLESKRNPL.

Residue G2 is the site of N-myristoyl glycine attachment. S20 carries the phosphoserine modification. In terms of domain architecture, Protein kinase spans 59–325; that stretch reads ENIVSEHGER…DLEIASHQLL (267 aa). ATP is bound by residues 65-73, N71, K87, and 133-135; these read HGERAPNVV and EFM. D181 serves as the catalytic Proton acceptor. Residues 185-186 and N205 contribute to the ATP site; that span reads YR. At S213 the chain carries Phosphoserine.

Belongs to the protein kinase superfamily. Ser/Thr protein kinase family. Interacts with ASK7/BIN2, BSK1, BSK5, BSK6 and BSK11. Interacts with BSL2. In terms of processing, phosphorylated by BRI1, ASK7/BIN2 and ASK9/BIL2.

The protein resides in the cell membrane. It catalyses the reaction L-seryl-[protein] + ATP = O-phospho-L-seryl-[protein] + ADP + H(+). The catalysed reaction is L-threonyl-[protein] + ATP = O-phospho-L-threonyl-[protein] + ADP + H(+). Its function is as follows. Probable serine/threonine kinase that acts as a positive regulator of brassinosteroid (BR) signaling downstream of the receptor kinase BRI1. Functions redundantly with BSK3, BSK4, BSK6 and BSK7. Involved in the regulation of sucrose-phosphate synthase 1 (SPS1) in the context of sucrose resuply after starvation. Activates BSL2, a phosphatase that may dephosphorylate SPS1, leading to the activation of SPS1. The protein is Serine/threonine-protein kinase BSK8 of Arabidopsis thaliana (Mouse-ear cress).